We begin with the raw amino-acid sequence, 240 residues long: Aquaporin Z (240 aa).

The next 2 membrane-spanning stretches (helical) occupy residues 10 to 30 and 35 to 55; these read AIGT…AAGF and IGLV…AYAI. Residues 64-66 carry the NPA 1 motif; the sequence is NPA. Transmembrane regions (helical) follow at residues 82–102, 131–151, and 160–180; these read ILPY…LLYI, MMAC…IIMG, and GFAP…SIPV. The NPA 2 signature appears at 186–188; sequence NPA. The helical transmembrane segment at 194–214 threads the bilayer; it reads ALFVGGWAMAQLWLFWVAPLI.

Belongs to the MIP/aquaporin (TC 1.A.8) family. In terms of assembly, homotetramer.

It localises to the cell inner membrane. The catalysed reaction is H2O(in) = H2O(out). Its function is as follows. Channel that permits osmotically driven movement of water in both directions. It is involved in the osmoregulation and in the maintenance of cell turgor during volume expansion in rapidly growing cells. It mediates rapid entry or exit of water in response to abrupt changes in osmolarity. The protein is Aquaporin Z of Bradyrhizobium diazoefficiens (strain JCM 10833 / BCRC 13528 / IAM 13628 / NBRC 14792 / USDA 110).